The primary structure comprises 77 residues: MSGLGIMLLTLLLLVFMETSHQDAGEKQATQRDAINVRRRRSLTRRVTEECEENCEEEEKHCCNTNNGPSCAPQCFG.

A signal peptide spans 1 to 22; the sequence is MSGLGIMLLTLLLLVFMETSHQ. Positions 23 to 44 are excised as a propeptide; sequence DAGEKQATQRDAINVRRRRSLT. 3 cysteine pairs are disulfide-bonded: cysteine 51/cysteine 63, cysteine 55/cysteine 71, and cysteine 62/cysteine 75. Phenylalanine amide is present on phenylalanine 76.

It belongs to the conotoxin O3 superfamily. As to expression, expressed by the venom duct.

The protein resides in the secreted. This is Conotoxin ArMSGL-0143 from Conus arenatus (Sand-dusted cone).